Consider the following 112-residue polypeptide: Probable insulin-like peptide beta-type 5 (112 aa).

A signal peptide spans methionine 1 to serine 19. Positions phenylalanine 20–arginine 58 are cleaved as a propeptide — removed; by convertase egl-3. 4 disulfides stabilise this stretch: cysteine 68/cysteine 97, cysteine 80/cysteine 110, cysteine 84/cysteine 111, and cysteine 96/cysteine 101.

This sequence belongs to the insulin family. In terms of processing, may be processed by serine endoprotease bli-4. Expressed by ASI and ASJ sensory neurons.

The protein localises to the secreted. In terms of biological role, probable insulin-like peptide which negatively regulates synapse development at the neuromuscular junctions. Probably acts as a daf-2/InsR agonist ligand to prevent dauer formation under optimal environmental conditions. Acts on AWC sensory neurons to regulate high salt chemotaxis responses. The sequence is that of Probable insulin-like peptide beta-type 5 (ins-6) from Caenorhabditis elegans.